The chain runs to 1088 residues: RNA-directed RNA polymerase (1088 aa).

The RdRp catalytic domain occupies 501-687 (LSYGDVTRFL…AKRYIAGGKI (187 aa)).

Belongs to the reoviridae RNA-directed RNA polymerase family. As to quaternary structure, interacts with VP3 (Potential). Interacts with VP2; this interaction activates VP1. Interacts with NSP5; this interaction is probably necessary for the formation of functional virus factories. Interacts with NSP2; this interaction is weak. Mg(2+) serves as cofactor.

It is found in the virion. The catalysed reaction is RNA(n) + a ribonucleoside 5'-triphosphate = RNA(n+1) + diphosphate. Functionally, RNA-directed RNA polymerase that is involved in both transcription and genome replication. Together with VP3 capping enzyme, forms an enzyme complex positioned near the channels situated at each of the five-fold vertices of the core. Following infection, the outermost layer of the virus is lost, leaving a double-layered particle (DLP) made up of the core and VP6 shell. VP1 then catalyzes the transcription of fully conservative plus-strand genomic RNAs that are extruded through the DLP's channels into the cytoplasm where they function as mRNAs for translation of viral proteins. One copy of each of the viral (+)RNAs is also recruited during core assembly, together with newly synthesized polymerase complexes and VP2. The polymerase of these novo-formed particles catalyzes the synthesis of complementary minus-strands leading to dsRNA formation. To do so, the polymerase specifically recognizes and binds 4 bases 5'-UGUG-3' in the conserved 3'-sequence of plus-strand RNA templates. VP2 presumably activates the autoinhibited VP1-RNA complex to coordinate packaging and genome replication. Once dsRNA synthesis is complete, the polymerase switches to the transcriptional mode, thus providing secondary transcription. This is RNA-directed RNA polymerase from Homo sapiens (Human).